We begin with the raw amino-acid sequence, 440 residues long: Chromosomal replication initiator protein DnaA (440 aa).

The segment at 1–75 (MNPNQILENL…QSGNKASVLI (75 aa)) is domain I, interacts with DnaA modulators. The segment at 75–99 (IQAQSAKQSSKSTKIDIAHIKAQST) is domain II. A domain III, AAA+ region region spans residues 100-316 (ILNPSFTFES…GIIISLNAYA (217 aa)). ATP contacts are provided by Gly146, Gly148, Lys149, and Thr150. Residues 317 to 440 (TILGQEITLE…KNKILVKSQS (124 aa)) are domain IV, binds dsDNA.

It belongs to the DnaA family. In terms of assembly, oligomerizes as a right-handed, spiral filament on DNA at oriC.

It localises to the cytoplasm. Plays an essential role in the initiation and regulation of chromosomal replication. ATP-DnaA binds to the origin of replication (oriC) to initiate formation of the DNA replication initiation complex once per cell cycle. Binds the DnaA box (a 9 base pair repeat at the origin) and separates the double-stranded (ds)DNA. Forms a right-handed helical filament on oriC DNA; dsDNA binds to the exterior of the filament while single-stranded (ss)DNA is stabiized in the filament's interior. The ATP-DnaA-oriC complex binds and stabilizes one strand of the AT-rich DNA unwinding element (DUE), permitting loading of DNA polymerase. After initiation quickly degrades to an ADP-DnaA complex that is not apt for DNA replication. Binds acidic phospholipids. The sequence is that of Chromosomal replication initiator protein DnaA from Campylobacter jejuni subsp. jejuni serotype O:6 (strain 81116 / NCTC 11828).